Reading from the N-terminus, the 536-residue chain is Apolipoprotein N-acyltransferase (536 aa).

Helical transmembrane passes span 10-30 (IASG…LLAG), 42-62 (AWPV…GSAA), 76-96 (WWFG…AFLV), 107-127 (AAIC…FALA), 136-158 (LRIL…LLTG), 181-201 (IGIW…AVLI), and 212-232 (AVPA…GIRL). Positions 248-501 (MQPNLPQDAR…EGVLDSGLPA (254 aa)) constitute a CN hydrolase domain. Glutamate 295 (proton acceptor) is an active-site residue. Lysine 360 is a catalytic residue. The Nucleophile role is filled by cysteine 413. A helical membrane pass occupies residues 509–529 (ARVGELPAAVLVALVMMLVLL).

This sequence belongs to the CN hydrolase family. Apolipoprotein N-acyltransferase subfamily.

It is found in the cell inner membrane. It catalyses the reaction N-terminal S-1,2-diacyl-sn-glyceryl-L-cysteinyl-[lipoprotein] + a glycerophospholipid = N-acyl-S-1,2-diacyl-sn-glyceryl-L-cysteinyl-[lipoprotein] + a 2-acyl-sn-glycero-3-phospholipid + H(+). The protein operates within protein modification; lipoprotein biosynthesis (N-acyl transfer). Catalyzes the phospholipid dependent N-acylation of the N-terminal cysteine of apolipoprotein, the last step in lipoprotein maturation. The chain is Apolipoprotein N-acyltransferase from Rhodopseudomonas palustris (strain ATCC BAA-98 / CGA009).